Here is a 71-residue protein sequence, read N- to C-terminus: Small ribosomal subunit protein bS21 (71 aa).

Positions 38–71 (YEKPTTVRKRAKAAAQKRHAKKLSRENARRVRLY) are disordered. Basic residues predominate over residues 43–59 (TVRKRAKAAAQKRHAKK). Positions 60–71 (LSRENARRVRLY) are enriched in basic and acidic residues.

This sequence belongs to the bacterial ribosomal protein bS21 family.

The chain is Small ribosomal subunit protein bS21 from Aliivibrio fischeri (strain ATCC 700601 / ES114) (Vibrio fischeri).